The chain runs to 357 residues: MKPATVKISSVALKHNIQIIKQKAPHSKIIAVVKANAYGHGVEFVSSTLENLVDGFGVARLAEALSVRSNGVTKPILLLEGFFSPKDLPILSVNNIQTVVHNQDQLDAIKRANLENPIKVWLKIDTGMHRLGVSLEEVDYYYNELMNCPNVDEVGFVSHFSRADETDSDYTNIQLNRFLDATKNKKGNRTIAASGGILFWEDSHLEYIRPGIIMYGVSPINIPSSEYGLIPVMTLTSSLIAVRDHKKGEPVGYGGIWVSERDTKIGVVAIGYGDGYPRNVPAGTPIYINGRRVPIVGRVSMDMVTVDLGPDCKDKVGDEAVLWGKELPIEEVAEITGLLSYELMTKLTPRVLTEYVD.

The active-site Proton acceptor; specific for D-alanine is K34. K34 is subject to N6-(pyridoxal phosphate)lysine. R130 serves as a coordination point for substrate. Y253 (proton acceptor; specific for L-alanine) is an active-site residue. M301 lines the substrate pocket.

It belongs to the alanine racemase family. It depends on pyridoxal 5'-phosphate as a cofactor.

The enzyme catalyses L-alanine = D-alanine. It participates in amino-acid biosynthesis; D-alanine biosynthesis; D-alanine from L-alanine: step 1/1. Functionally, catalyzes the interconversion of L-alanine and D-alanine. May also act on other amino acids. The chain is Alanine racemase (alr) from Mannheimia succiniciproducens (strain KCTC 0769BP / MBEL55E).